Here is a 194-residue protein sequence, read N- to C-terminus: tRNA (pseudouridine(54)-N(1))-methyltransferase (194 aa).

S-adenosyl-L-methionine is bound at residue leucine 125.

The protein belongs to the methyltransferase superfamily. TrmY family. In terms of assembly, homodimer.

It localises to the cytoplasm. The enzyme catalyses pseudouridine(54) in tRNA + S-adenosyl-L-methionine = N(1)-methylpseudouridine(54) in tRNA + S-adenosyl-L-homocysteine + H(+). In terms of biological role, specifically catalyzes the N1-methylation of pseudouridine at position 54 (Psi54) in tRNAs. This is tRNA (pseudouridine(54)-N(1))-methyltransferase from Methanospirillum hungatei JF-1 (strain ATCC 27890 / DSM 864 / NBRC 100397 / JF-1).